Reading from the N-terminus, the 341-residue chain is Anthranilate phosphoribosyltransferase (341 aa).

Residues Gly79, Gly82–Asp83, Thr87, Asn89–Thr92, Lys107–Ser115, and Ser119 contribute to the 5-phospho-alpha-D-ribose 1-diphosphate site. An anthranilate-binding site is contributed by Gly79. Ser91 serves as a coordination point for Mg(2+). An anthranilate-binding site is contributed by Asn110. Arg164 provides a ligand contact to anthranilate. Mg(2+)-binding residues include Asp222 and Glu223.

This sequence belongs to the anthranilate phosphoribosyltransferase family. In terms of assembly, homodimer. Mg(2+) serves as cofactor.

It carries out the reaction N-(5-phospho-beta-D-ribosyl)anthranilate + diphosphate = 5-phospho-alpha-D-ribose 1-diphosphate + anthranilate. The protein operates within amino-acid biosynthesis; L-tryptophan biosynthesis; L-tryptophan from chorismate: step 2/5. Catalyzes the transfer of the phosphoribosyl group of 5-phosphorylribose-1-pyrophosphate (PRPP) to anthranilate to yield N-(5'-phosphoribosyl)-anthranilate (PRA). The sequence is that of Anthranilate phosphoribosyltransferase from Blochmanniella pennsylvanica (strain BPEN).